Here is a 169-residue protein sequence, read N- to C-terminus: Large ribosomal subunit protein uL10 (169 aa).

Belongs to the universal ribosomal protein uL10 family. In terms of assembly, part of the ribosomal stalk of the 50S ribosomal subunit. The N-terminus interacts with L11 and the large rRNA to form the base of the stalk. The C-terminus forms an elongated spine to which L12 dimers bind in a sequential fashion forming a multimeric L10(L12)X complex.

Forms part of the ribosomal stalk, playing a central role in the interaction of the ribosome with GTP-bound translation factors. This chain is Large ribosomal subunit protein uL10, found in Rickettsia bellii (strain OSU 85-389).